We begin with the raw amino-acid sequence, 1486 residues long: Chromosome partition protein MukB (1486 aa).

34-41 provides a ligand contact to ATP; sequence GGNGAGKS. Coiled-coil stretches lie at residues 326–418, 444–480, and 509–603; these read LEAD…QYNQ, LETFQAKELEATEKMLSLEQKMSMAQTAHSQFEQAYQ, and RHLA…RAPV. The tract at residues 666–783 is flexible hinge; that stretch reads PGGSEDQRLN…EVPLFGRAAR (118 aa). 3 coiled-coil regions span residues 835–923, 977–1115, and 1209–1266; these read EAEI…AKLE, EMLS…TAKA, and VEAI…QNVS.

The protein belongs to the SMC family. MukB subfamily. In terms of assembly, homodimerization via its hinge domain. Binds to DNA via its C-terminal region. Interacts, and probably forms a ternary complex, with MukE and MukF via its C-terminal region. The complex formation is stimulated by calcium or magnesium. Interacts with tubulin-related protein FtsZ.

It localises to the cytoplasm. Its subcellular location is the nucleoid. Its function is as follows. Plays a central role in chromosome condensation, segregation and cell cycle progression. Functions as a homodimer, which is essential for chromosome partition. Involved in negative DNA supercoiling in vivo, and by this means organize and compact chromosomes. May achieve or facilitate chromosome segregation by condensation DNA from both sides of a centrally located replisome during cell division. The polypeptide is Chromosome partition protein MukB (Escherichia coli (strain K12 / MC4100 / BW2952)).